The primary structure comprises 232 residues: Ribosomal RNA small subunit methyltransferase G (232 aa).

S-adenosyl-L-methionine-binding positions include Gly93, Leu98, 144–145 (VE), and Arg163.

The protein belongs to the methyltransferase superfamily. RNA methyltransferase RsmG family.

The protein resides in the cytoplasm. It catalyses the reaction guanosine(527) in 16S rRNA + S-adenosyl-L-methionine = N(7)-methylguanosine(527) in 16S rRNA + S-adenosyl-L-homocysteine. In terms of biological role, specifically methylates the N7 position of guanine in position 527 of 16S rRNA. The protein is Ribosomal RNA small subunit methyltransferase G of Burkholderia pseudomallei (strain 1106a).